Here is a 442-residue protein sequence, read N- to C-terminus: Coiled-coil domain-containing protein 91 (442 aa).

The GGA1-binding motif stretch occupies residues Met1–Asp16. Positions Met1 to Pro27 are disordered. Phosphoserine is present on residues Ser43 and Ser46. The disordered stretch occupies residues Glu48–Ser79. Coiled coils occupy residues Gly127 to Ile213 and Cys248 to Gln409. The segment at Leu211–Arg414 is homodimerization.

In terms of assembly, homodimer. Interacts with GGA1, GGA2 and AP1G1.

Its subcellular location is the membrane. It localises to the golgi apparatus. The protein resides in the trans-Golgi network membrane. The protein localises to the trans-Golgi network. Functionally, involved in the regulation of membrane traffic through the trans-Golgi network (TGN). Functions in close cooperation with the GGAs in the sorting of hydrolases to lysosomes. In Rattus norvegicus (Rat), this protein is Coiled-coil domain-containing protein 91 (Ccdc91).